We begin with the raw amino-acid sequence, 730 residues long: Jacalin-related lectin 5 (730 aa).

The Jacalin-type lectin 1 domain maps to 1 to 126 (MSWDDGKHTK…LNSIDAHFAP (126 aa)). The disordered stretch occupies residues 121–450 (DAHFAPAPPP…GNQWDDGTDH (330 aa)). Composition is skewed to low complexity over residues 138–153 (GASG…GSAG), 168–179 (AGGSKPSSGSAG), 196–207 (AGGSKPSSGSAG), and 248–261 (TEKN…SSGS). Positions 275 to 307 (ETVSNIGDTESNAGGSKSNDGANNGASGIESNA) are enriched in polar residues. The span at 314–323 (FGAGGTGGIG) shows a compositional bias: gly residues. Low complexity predominate over residues 343 to 358 (DGASGIGSNDGSTGTN). 2 stretches are compositionally biased toward polar residues: residues 366 to 375 (DSNIEGTENN) and 388 to 416 (IGNS…TGGK). The span at 417–429 (ESNTGSESNTNSS) shows a compositional bias: low complexity. 2 Jacalin-type lectin domains span residues 430–572 (PQKL…YFVP) and 584–727 (PNKV…YFIP).

Belongs to the jacalin lectin family.

This Arabidopsis thaliana (Mouse-ear cress) protein is Jacalin-related lectin 5 (JAL5).